We begin with the raw amino-acid sequence, 155 residues long: SsrA-binding protein (155 aa).

It belongs to the SmpB family.

It localises to the cytoplasm. Its function is as follows. Required for rescue of stalled ribosomes mediated by trans-translation. Binds to transfer-messenger RNA (tmRNA), required for stable association of tmRNA with ribosomes. tmRNA and SmpB together mimic tRNA shape, replacing the anticodon stem-loop with SmpB. tmRNA is encoded by the ssrA gene; the 2 termini fold to resemble tRNA(Ala) and it encodes a 'tag peptide', a short internal open reading frame. During trans-translation Ala-aminoacylated tmRNA acts like a tRNA, entering the A-site of stalled ribosomes, displacing the stalled mRNA. The ribosome then switches to translate the ORF on the tmRNA; the nascent peptide is terminated with the 'tag peptide' encoded by the tmRNA and targeted for degradation. The ribosome is freed to recommence translation, which seems to be the essential function of trans-translation. This is SsrA-binding protein from Bacillus cereus (strain G9842).